The primary structure comprises 100 residues: Urease subunit gamma (100 aa).

This sequence belongs to the urease gamma subunit family. Heterotrimer of UreA (gamma), UreB (beta) and UreC (alpha) subunits. Three heterotrimers associate to form the active enzyme.

The protein resides in the cytoplasm. It carries out the reaction urea + 2 H2O + H(+) = hydrogencarbonate + 2 NH4(+). The protein operates within nitrogen metabolism; urea degradation; CO(2) and NH(3) from urea (urease route): step 1/1. The polypeptide is Urease subunit gamma (Haemophilus influenzae (strain PittGG)).